A 173-amino-acid polypeptide reads, in one-letter code: uncharacterized protein (173 aa).

It belongs to the ycf73 family.

The protein localises to the plastid. It is found in the chloroplast. This is an uncharacterized protein from Saccharum hybrid (Sugarcane).